Here is a 1516-residue protein sequence, read N- to C-terminus: Neurite extension and migration factor (1516 aa).

Residues 380 to 405 show a composition bias toward basic and acidic residues; sequence LDKKKGKEEGQEDKGVEKKDGKDNGE. 5 disordered regions span residues 380–440, 589–610, 1158–1225, 1373–1419, and 1437–1479; these read LDKK…GSFS, QKKK…SQKQ, TFND…STKK, TPQE…PGYN, and LGNN…ESGT. Polar residues-rich tracts occupy residues 596 to 610, 1158 to 1170, and 1185 to 1194; these read NTNT…SQKQ, TFND…STNN, and GAMNQSSSQK. Residues 1443–1453 are compositionally biased toward basic residues; it reads THKKLYRHKSS. Over residues 1456–1479 the composition is skewed to basic and acidic residues; it reads ALRDEKCKGKHMEREQVHKDESGT.

Highly expressed in fetal and adult brain, predominantly in the cerebral cortex and the cerebellum. Also expressed in other tissues but to a lesser extent.

It is found in the nucleus. The protein resides in the cytoplasm. Functionally, involved in neurite outgrowth by regulating cell-cell adhesion via the N-cadherin signaling pathway. May act by regulating expression of protein-coding genes, such as N-cadherins and integrin beta-1 (ITGB1). The sequence is that of Neurite extension and migration factor from Homo sapiens (Human).